The chain runs to 245 residues: tRNA pseudouridine synthase A 2 (245 aa).

Aspartate 53 (nucleophile) is an active-site residue. Tyrosine 111 lines the substrate pocket.

This sequence belongs to the tRNA pseudouridine synthase TruA family. Homodimer.

The enzyme catalyses uridine(38/39/40) in tRNA = pseudouridine(38/39/40) in tRNA. Functionally, formation of pseudouridine at positions 38, 39 and 40 in the anticodon stem and loop of transfer RNAs. The polypeptide is tRNA pseudouridine synthase A 2 (Bacillus cereus (strain ATCC 14579 / DSM 31 / CCUG 7414 / JCM 2152 / NBRC 15305 / NCIMB 9373 / NCTC 2599 / NRRL B-3711)).